We begin with the raw amino-acid sequence, 123 residues long: Holo-[acyl-carrier-protein] synthase (123 aa).

The Mg(2+) site is built by Asp-8 and Glu-60.

Belongs to the P-Pant transferase superfamily. AcpS family. The cofactor is Mg(2+).

The protein resides in the cytoplasm. The enzyme catalyses apo-[ACP] + CoA = holo-[ACP] + adenosine 3',5'-bisphosphate + H(+). In terms of biological role, transfers the 4'-phosphopantetheine moiety from coenzyme A to a Ser of acyl-carrier-protein. The chain is Holo-[acyl-carrier-protein] synthase from Ehrlichia ruminantium (strain Welgevonden).